Consider the following 1476-residue polypeptide: SH3 and multiple ankyrin repeat domains protein 2 (1476 aa).

The span at 66–76 (LSPQLLQQTPS) shows a compositional bias: polar residues. Residues 66 to 134 (LSPQLLQQTP…GANKDSLSTF (69 aa)) form a disordered region. Positions 147-206 (VPGRLFVAVKPYQPQVDGEIPLHRGDRVKVLSIGEGGFWEGSARGHIGWFPAECVEEVQC) constitute an SH3 domain. A Phosphoserine modification is found at V162. Positions 247 to 341 (TVVLQKKDNE…HLILKVVTVT (95 aa)) constitute a PDZ domain. S372 is modified (phosphoserine). The disordered stretch occupies residues 391 to 412 (RKKKDKPEEIVPASKPSRTAEN). At S456 the chain carries Phosphoserine. Phosphothreonine is present on T485. The disordered stretch occupies residues 503–533 (LSMPDTSEDIPPPPQSVPPSPPPPSPTTYNC). The segment covering 512-528 (IPPPPQSVPPSPPPPSP) has biased composition (pro residues). S586 carries the post-translational modification Phosphoserine. 3 disordered regions span residues 659–916 (TIIV…KDRR), 946–983 (VPMAGPPLEEEEDREDGDTKPDHSPSTVPEGVPKTEGA), and 1057–1153 (PALA…ESMD). Low complexity predominate over residues 666-678 (STSSSGKSSQGSS). Basic and acidic residues predominate over residues 711–722 (VRDREKRLEARR). S724 carries the phosphoserine modification. Over residues 783–795 (LGGGEAGAQGEAG) the composition is skewed to gly residues. Residues 833 to 846 (RLLDPSSPLALALS) are compositionally biased toward low complexity. 2 stretches are compositionally biased toward basic and acidic residues: residues 847 to 868 (ARDRAMQESQQGHKGEAPKADL) and 899 to 916 (RRQETENKYETDLGKDRR). T903 bears the Phosphothreonine mark. Polar residues predominate over residues 1070-1085 (TSQPPTLNSSQPANST). Over residues 1119–1130 (VDSRSSSDHHLE) the composition is skewed to basic and acidic residues. Residues 1131–1151 (TTSTISTVSSISTLSSEGGES) are compositionally biased toward low complexity. The SH3-binding signature appears at 1169-1175 (PPVPPKP). Disordered stretches follow at residues 1195–1216 (EDTDGFVIPPPAPPPPPGSAQA) and 1260–1403 (NRGK…ISNK). The span at 1202 to 1212 (IPPPAPPPPPG) shows a compositional bias: pro residues. Positions 1291-1305 (STVSGTRSTTVTFTV) are enriched in low complexity. T1292 carries O-linked (GlcNAc) threonine glycosylation. Polar residues predominate over residues 1307 to 1317 (PGTSQPITLQS). 2 positions are modified to phosphoserine: S1334 and S1338. Residues 1364–1375 (LSDVFSLPSQSP) are compositionally biased toward polar residues. Residues 1387 to 1401 (RSRSPSPSILQQPIS) show a composition bias toward low complexity. The 64-residue stretch at 1413-1476 (WTKPDVADWL…ERALKQLLDR (64 aa)) folds into the SAM domain.

The protein belongs to the SHANK family. As to quaternary structure, is part of a complex with DLG4/PSD-95 and DLGAP1/GKAP. Interacts with CTTN/cortactin SH3 domain, DLGAP1/GKAP and alpha-latrotoxin receptor 1. Interacts with DNM2, DBNL, GRID2, BAIAP2, SLC9A3, PLCB3 and CFTR. Interacts (via proline-rich region) with PDE4D. Interacts with ABI1 (via SH3 domain). Detected in brain (at protein level), where it is highly expressed in Purkinje cells.

It localises to the apical cell membrane. The protein resides in the cytoplasm. Its subcellular location is the synapse. The protein localises to the postsynaptic density. It is found in the cell projection. It localises to the dendritic spine. The protein resides in the growth cone. Seems to be an adapter protein in the postsynaptic density (PSD) of excitatory synapses that interconnects receptors of the postsynaptic membrane including NMDA-type and metabotropic glutamate receptors, and the actin-based cytoskeleton. May play a role in the structural and functional organization of the dendritic spine and synaptic junction. The protein is SH3 and multiple ankyrin repeat domains protein 2 (Shank2) of Mus musculus (Mouse).